Consider the following 415-residue polypeptide: uncharacterized protein (415 aa).

This is an uncharacterized protein from Rickettsia prowazekii (strain Madrid E).